The sequence spans 114 residues: NTGGKAPRKHIAHKQAKKSSAAAATGGVKKPHRFRPGTVALREIRRFQKSTELLIRKLPFQRLVREIASEFKNDLRFQSSAVLALQEASEAYLVGLFEDTNLCAIHAKRVTIMP.

The span at 1–17 (NTGGKAPRKHIAHKQAK) shows a compositional bias: basic residues. Residues 1–32 (NTGGKAPRKHIAHKQAKKSSAAAATGGVKKPH) form a disordered region. The span at 18-28 (KSSAAAATGGV) shows a compositional bias: low complexity.

The protein belongs to the histone H3 family. The nucleosome is a histone octamer containing two molecules each of H2A, H2B, H3 and H4 assembled in one H3-H4 heterotetramer and two H2A-H2B heterodimers. The octamer wraps approximately 147 bp of DNA.

Its subcellular location is the nucleus. It is found in the chromosome. In terms of biological role, core component of nucleosome. Nucleosomes wrap and compact DNA into chromatin, limiting DNA accessibility to the cellular machineries which require DNA as a template. Histones thereby play a central role in transcription regulation, DNA repair, DNA replication and chromosomal stability. DNA accessibility is regulated via a complex set of post-translational modifications of histones, also called histone code, and nucleosome remodeling. The sequence is that of Histone H3-3 (H3-3) from Stylonychia lemnae (Ciliate).